Here is a 580-residue protein sequence, read N- to C-terminus: DNA ligase 1 (580 aa).

Glutamate 245 provides a ligand contact to ATP. Lysine 247 acts as the N6-AMP-lysine intermediate in catalysis. ATP contacts are provided by arginine 252, arginine 267, glutamate 297, phenylalanine 343, arginine 420, and lysine 426.

It belongs to the ATP-dependent DNA ligase family. Mg(2+) serves as cofactor.

The enzyme catalyses ATP + (deoxyribonucleotide)n-3'-hydroxyl + 5'-phospho-(deoxyribonucleotide)m = (deoxyribonucleotide)n+m + AMP + diphosphate.. In terms of biological role, DNA ligase that seals nicks in double-stranded DNA during DNA replication, DNA recombination and DNA repair. The protein is DNA ligase 1 of Methanosarcina acetivorans (strain ATCC 35395 / DSM 2834 / JCM 12185 / C2A).